A 1013-amino-acid chain; its full sequence is Tolloid-like protein 1 (1013 aa).

The N-terminal stretch at 1–30 is a signal peptide; it reads MGLQALSPRMLLWLVVSGIVFSRVLWVCAG. Residues 31–147 constitute a propeptide that is removed on maturation; that stretch reads LDYDYTFDGN…EQSEKNRVPR (117 aa). A disordered region spans residues 124–150; sequence QNNTMKGKAPPKLSEQSEKNRVPRAAT. A Peptidase M12A domain is found at 148–347; it reads AATSRTERIW…AQARKLYRCP (200 aa). Residue Asn169 is glycosylated (N-linked (GlcNAc...) asparagine). 4 disulfides stabilise this stretch: Cys190-Cys346, Cys210-Cys232, Cys212-Cys213, and Cys349-Cys375. Position 240 (His240) interacts with Zn(2+). Glu241 is a catalytic residue. His244 and His250 together coordinate Zn(2+). CUB domains lie at 349–461 and 462–574; these read CGET…YEAI and CGGE…FFKE. 2 N-linked (GlcNAc...) asparagine glycosylation sites follow: Asn359 and Asn390. 15 cysteine pairs are disulfide-bonded: Cys402/Cys424, Cys462/Cys488, Cys515/Cys537, Cys578/Cys590, Cys586/Cys599, Cys601/Cys614, Cys618/Cys644, Cys671/Cys693, Cys734/Cys745, Cys741/Cys754, Cys756/Cys769, Cys774/Cys800, Cys827/Cys849, Cys887/Cys917, and Cys944/Cys966. An EGF-like 1; calcium-binding domain is found at 574–615; sequence EEDECAKPDRGGCEQRCLNTLGSYQCACEPGYELGPDRRSCE. The CUB 3 domain maps to 618 to 730; it reads CGGLLTKLNG…KGFKAHFFSD (113 aa). A glycan (N-linked (GlcNAc...) asparagine) is linked at Asn626. Residues 730–770 enclose the EGF-like 2; calcium-binding domain; that stretch reads DKDECSKDNGGCQHECVNTMGSYTCQCRNGFVLHENKHDCK. 2 consecutive CUB domains span residues 774–886 and 887–1003; these read CEQK…HSTE and CGGR…YKSI.

Zn(2+) is required as a cofactor. Highly expressed in brain and kidney and weakly in lung, skeletal muscle. A perceptible level of expression is observed in heart and testis.

The protein localises to the secreted. Its function is as follows. Protease which processes procollagen C-propeptides, such as chordin, pro-biglycan and pro-lysyl oxidase. Required for the embryonic development, especially heart development. Predominant protease, which in the development, influences dorsal-ventral patterning and skeletogenesis. The polypeptide is Tolloid-like protein 1 (Tll1) (Mus musculus (Mouse)).